Here is a 159-residue protein sequence, read N- to C-terminus: Intron-encoded endonuclease ai4 (159 aa).

This sequence belongs to the LAGLIDADG endonuclease family.

Its subcellular location is the mitochondrion. Its function is as follows. Mitochondrial DNA endonuclease involved in intron homing. This Dictyostelium discoideum (Social amoeba) protein is Intron-encoded endonuclease ai4 (ai4).